Consider the following 467-residue polypeptide: Fumarate hydratase class II (467 aa).

Substrate contacts are provided by residues Ser-98–Thr-100, Arg-126, His-129–Asp-132, Ser-139–Asn-141, and Thr-187. Catalysis depends on His-188, which acts as the Proton donor/acceptor. Ser-318 is a catalytic residue. Residues Ser-319 and Lys-324–Asn-326 contribute to the substrate site.

The protein belongs to the class-II fumarase/aspartase family. Fumarase subfamily. In terms of assembly, homotetramer.

It is found in the cytoplasm. The catalysed reaction is (S)-malate = fumarate + H2O. It participates in carbohydrate metabolism; tricarboxylic acid cycle; (S)-malate from fumarate: step 1/1. Involved in the TCA cycle. Catalyzes the stereospecific interconversion of fumarate to L-malate. The sequence is that of Fumarate hydratase class II from Salmonella typhi.